A 178-amino-acid chain; its full sequence is Anthranilate synthase component 2 (178 aa).

Positions 1-178 (MIVVVDCKDS…RNFVEMCHDG (178 aa)) constitute a Glutamine amidotransferase type-1 domain. 49–51 (GPG) provides a ligand contact to L-glutamine. Catalysis depends on C71, which acts as the Nucleophile; for GATase activity. L-glutamine contacts are provided by residues Q75 and 120–121 (SL). Residues H155 and E157 each act as for GATase activity in the active site.

As to quaternary structure, heterotetramer consisting of two non-identical subunits: a beta subunit (TrpG) and a large alpha subunit (TrpE).

The catalysed reaction is chorismate + L-glutamine = anthranilate + pyruvate + L-glutamate + H(+). Its pathway is amino-acid biosynthesis; L-tryptophan biosynthesis; L-tryptophan from chorismate: step 1/5. Its function is as follows. Part of a heterotetrameric complex that catalyzes the two-step biosynthesis of anthranilate, an intermediate in the biosynthesis of L-tryptophan. In the first step, the glutamine-binding beta subunit (TrpG) of anthranilate synthase (AS) provides the glutamine amidotransferase activity which generates ammonia as a substrate that, along with chorismate, is used in the second step, catalyzed by the large alpha subunit of AS (TrpE) to produce anthranilate. In the absence of TrpG, TrpE can synthesize anthranilate directly from chorismate and high concentrations of ammonia. This Archaeoglobus fulgidus (strain ATCC 49558 / DSM 4304 / JCM 9628 / NBRC 100126 / VC-16) protein is Anthranilate synthase component 2 (trpG).